The following is a 439-amino-acid chain: GTPase Der (439 aa).

EngA-type G domains lie at 4–169 (AMVS…PQEE) and 177–352 (IKIA…EEYN). Residues 10-17 (GRPNVGKS), 57-61 (DTGGL), 120-123 (NKVD), 183-190 (GKPNVGKS), 230-234 (DTAGI), and 295-298 (NKWD) each bind GTP. The region spanning 353 to 437 (KRITTGLLNN…PVVISTRKRG (85 aa)) is the KH-like domain.

The protein belongs to the TRAFAC class TrmE-Era-EngA-EngB-Septin-like GTPase superfamily. EngA (Der) GTPase family. As to quaternary structure, associates with the 50S ribosomal subunit.

Functionally, GTPase that plays an essential role in the late steps of ribosome biogenesis. This Thermoanaerobacter pseudethanolicus (strain ATCC 33223 / 39E) (Clostridium thermohydrosulfuricum) protein is GTPase Der.